Reading from the N-terminus, the 477-residue chain is Alanine--glyoxylate aminotransferase 2 homolog 2, mitochondrial (477 aa).

The transit peptide at 1-22 directs the protein to the mitochondrion; it reads MQRFAAKRSVQNISVSLWRRCI. Pyridoxal 5'-phosphate-binding positions include 165 to 166, Y192, and 292 to 295; these read GT and DEVQ. Position 321 is an N6-(pyridoxal phosphate)lysine (K321). T350 lines the pyridoxal 5'-phosphate pocket.

Belongs to the class-III pyridoxal-phosphate-dependent aminotransferase family. As to quaternary structure, homotetramer. Interacts with GRF3. The cofactor is pyridoxal 5'-phosphate.

The protein localises to the mitochondrion. It catalyses the reaction glyoxylate + L-alanine = glycine + pyruvate. This chain is Alanine--glyoxylate aminotransferase 2 homolog 2, mitochondrial (AGT3), found in Arabidopsis thaliana (Mouse-ear cress).